The chain runs to 598 residues: Arylsulfatase J (598 aa).

A signal peptide spans 1-47 (MAPRDSAEPLPPLSPQAWAWSGKFLAMGALAGFSVLSLLTYGYLCWG). The Ca(2+) site is built by D82, D83, and C120. The active-site Nucleophile is the C120. C120 is modified (3-oxoalanine (Cys)). A glycan (N-linked (GlcNAc...) asparagine) is linked at N155. K174 serves as a coordination point for substrate. H176 is an active-site residue. Residue H267 coordinates substrate. N304 and N316 each carry an N-linked (GlcNAc...) asparagine glycan. Ca(2+)-binding residues include D325 and N326. K343 lines the substrate pocket. 4 N-linked (GlcNAc...) asparagine glycosylation sites follow: N429, N495, N525, and N563. The segment at 532–598 (RYPPKDPRSN…IKCHPSVATG (67 aa)) is disordered. Positions 559 to 583 (KKKSNKTKAKKMQKKKSKARMRKQL) are enriched in basic residues.

The protein belongs to the sulfatase family. Ca(2+) serves as cofactor. The conversion to 3-oxoalanine (also known as C-formylglycine, FGly), of a serine or cysteine residue in prokaryotes and of a cysteine residue in eukaryotes, is critical for catalytic activity.

Its subcellular location is the secreted. In Mus musculus (Mouse), this protein is Arylsulfatase J (Arsj).